The primary structure comprises 77 residues: Acyl carrier protein (77 aa).

In terms of domain architecture, Carrier spans 2 to 77 (SDIAARVKKI…DATKFISEAQ (76 aa)). Ser37 is subject to O-(pantetheine 4'-phosphoryl)serine.

The protein belongs to the acyl carrier protein (ACP) family. Post-translationally, 4'-phosphopantetheine is transferred from CoA to a specific serine of apo-ACP by AcpS. This modification is essential for activity because fatty acids are bound in thioester linkage to the sulfhydryl of the prosthetic group.

The protein resides in the cytoplasm. It participates in lipid metabolism; fatty acid biosynthesis. Carrier of the growing fatty acid chain in fatty acid biosynthesis. The protein is Acyl carrier protein of Jannaschia sp. (strain CCS1).